We begin with the raw amino-acid sequence, 546 residues long: NADH-ubiquinone oxidoreductase chain 5 (546 aa).

Transmembrane regions (helical) follow at residues 1-21 (MFLL…SPIA), 31-51 (IIAI…YYEV), 52-72 (VFMG…VGTF), 82-102 (LLTA…HMYA), 112-132 (LNLF…LVAA), 135-155 (LLVM…LIGY), 175-195 (VSDG…GSLE), 198-218 (LLNV…GAMG), 237-257 (TPVS…YLLV), 264-284 (EMFV…FGAT), 291-310 (VIAY…LGLG), 321-341 (LMTH…VISG), 358-378 (AMFT…WPEL), 387-407 (ILNL…TLLL), 440-460 (VLPI…VWVG), and 468-488 (LFFL…AGIL).

Belongs to the complex I subunit 5 family.

The protein localises to the mitochondrion inner membrane. The enzyme catalyses a ubiquinone + NADH + 5 H(+)(in) = a ubiquinol + NAD(+) + 4 H(+)(out). Functionally, core subunit of the mitochondrial membrane respiratory chain NADH dehydrogenase (Complex I) that is believed to belong to the minimal assembly required for catalysis. Complex I functions in the transfer of electrons from NADH to the respiratory chain. The immediate electron acceptor for the enzyme is believed to be ubiquinone. This is NADH-ubiquinone oxidoreductase chain 5 (ND5) from Chlamydomonas reinhardtii (Chlamydomonas smithii).